Reading from the N-terminus, the 562-residue chain is Sulfite reductase [NADPH] hemoprotein beta-component (562 aa).

[4Fe-4S] cluster is bound by residues C428, C434, C473, and C477. Position 477 (C477) interacts with siroheme.

Belongs to the nitrite and sulfite reductase 4Fe-4S domain family. As to quaternary structure, alpha(8)-beta(8). The alpha component is a flavoprotein, the beta component is a hemoprotein. It depends on siroheme as a cofactor. [4Fe-4S] cluster serves as cofactor.

The enzyme catalyses hydrogen sulfide + 3 NADP(+) + 3 H2O = sulfite + 3 NADPH + 4 H(+). The protein operates within sulfur metabolism; hydrogen sulfide biosynthesis; hydrogen sulfide from sulfite (NADPH route): step 1/1. Functionally, component of the sulfite reductase complex that catalyzes the 6-electron reduction of sulfite to sulfide. This is one of several activities required for the biosynthesis of L-cysteine from sulfate. This Myxococcus xanthus (strain DK1622) protein is Sulfite reductase [NADPH] hemoprotein beta-component.